A 637-amino-acid polypeptide reads, in one-letter code: PTS system mannitol-specific EIICBA component (637 aa).

At M1–N23 the chain is on the cytoplasmic side. The PTS EIIC type-2 domain occupies F12–E341. A helical transmembrane segment spans residues I24–N45. Over E46–A49 the chain is Periplasmic. The chain crosses the membrane as a helical span at residues K50–K70. Residues L71 to F133 lie on the Cytoplasmic side of the membrane. The chain crosses the membrane as a helical span at residues S134–E155. Residues A156–G164 lie on the Periplasmic side of the membrane. A helical transmembrane segment spans residues V165–K185. The Cytoplasmic segment spans residues I186 to A272. Residues V273–V292 form a helical membrane-spanning segment. The Periplasmic portion of the chain corresponds to S293 to Y312. Residues F313 to L334 traverse the membrane as a helical segment. The Cytoplasmic portion of the chain corresponds to K335–K637. In terms of domain architecture, PTS EIIB type-2 spans R378–A473. C384 serves as the catalytic Phosphocysteine intermediate; for EIIB activity. C384 carries the post-translational modification Phosphocysteine; by EIIA. The PTS EIIA type-2 domain occupies F494–R636. The active-site Tele-phosphohistidine intermediate; for EIIA activity is the H554. The residue at position 554 (H554) is a Phosphohistidine; by HPr.

In terms of assembly, homodimer. Post-translationally, an intramolecular phosphotransfer takes places between His-554 and Cys-384.

The protein localises to the cell inner membrane. It catalyses the reaction D-mannitol(out) + N(pros)-phospho-L-histidyl-[protein] = D-mannitol 1-phosphate(in) + L-histidyl-[protein]. Its function is as follows. The phosphoenolpyruvate-dependent sugar phosphotransferase system (sugar PTS), a major carbohydrate active transport system, catalyzes the phosphorylation of incoming sugar substrates concomitantly with their translocation across the cell membrane. This system is involved in D-mannitol transport. Also able to use D-mannonic acid. This chain is PTS system mannitol-specific EIICBA component, found in Escherichia coli (strain K12).